A 1196-amino-acid polypeptide reads, in one-letter code: DNA polymerase beta (1196 aa).

This sequence belongs to the DNA polymerase type-B family.

The catalysed reaction is DNA(n) + a 2'-deoxyribonucleoside 5'-triphosphate = DNA(n+1) + diphosphate. DNA-directed DNA polymerase involved in viral DNA replication. This chain is DNA polymerase beta, found in African swine fever virus (isolate Pig/Kenya/KEN-50/1950) (ASFV).